A 124-amino-acid polypeptide reads, in one-letter code: MAVLGPKATLAAVFIGPFIVACMLGIGLVYLLQLQVQIFHVKDTIRVTGKPATVSYTISTPVTPSATTLDGTTYTLIRPTSSYTRVYLGKTRGFDTSTFGPKVLDYITSSKPHLNSGRPYSLSC.

The helical transmembrane segment at 12 to 32 threads the bilayer; it reads AVFIGPFIVACMLGIGLVYLL.

Belongs to the coronaviruses ns4/ns4.8 protein family.

It is found in the host membrane. This Mus musculus (Mouse) protein is Non-structural protein 4.